A 111-amino-acid polypeptide reads, in one-letter code: Auxin-repressed 12.5 kDa protein (111 aa).

A disordered region spans residues 18–111 (ERGLGMLRKV…SGETRSKHHR (94 aa)). Residues 43-57 (TMPTTPTTPVTPTTP) show a composition bias toward low complexity. Residues 74–95 (SNLSSKTMGNQVFDSPQPNSPT) show a composition bias toward polar residues.

It belongs to the DRM1/ARP family.

The sequence is that of Auxin-repressed 12.5 kDa protein from Fragaria ananassa (Strawberry).